We begin with the raw amino-acid sequence, 570 residues long: MRVSKYLLSTQKETPANAEVISHQLMLRAGMIRRNASGLYSYLPTGLRVLRKVEAIVREEMNKAGAIEILMPMVQPADLWVETGRWDKFGPELLRFKDRHNRDFVLGPTHEEVITDLIRKEVSSYKQLPLNLYQIQTKFRDEVRPRFGVMRSREFLMKDAYSFHLDVDTMNETYEAMYQAYSNILSRMGLAFRPVLADTGSIGGSMSHEFHVLAQSGEDLIAYSTGSDYAANIEKAESPMPTEARGSATEELRLVDTPNAKTIAELVEQFGLDITKTVKTLIVKGATEEAPLVALIVRGDHELNEIKADKLDLVASPLEFAPEALIRDAIGAGPGSLGPVGLNMPIIIDHSVSVMSDFAAGANQDDKHYFGINWERDLPLAQAADIRNVVEGEPTPDGLGTYAMARGIEVGHIFQLGTNYSKSMNATVLDENGKSQVLLMGCYGVGVSRIVAAAIEQNFDDRGIVWPEAIAPFSVGILPMNMHKSHRVTDIAEQLYKDLSAAGIDVLLDDRKERPGVMFADMELIGIPHTVVIGDRNIDAGVFEYKNRRTGEKQDVPFDQIVDFLKNLQA.

This sequence belongs to the class-II aminoacyl-tRNA synthetase family. ProS type 1 subfamily. Homodimer.

It localises to the cytoplasm. It carries out the reaction tRNA(Pro) + L-proline + ATP = L-prolyl-tRNA(Pro) + AMP + diphosphate. In terms of biological role, catalyzes the attachment of proline to tRNA(Pro) in a two-step reaction: proline is first activated by ATP to form Pro-AMP and then transferred to the acceptor end of tRNA(Pro). As ProRS can inadvertently accommodate and process non-cognate amino acids such as alanine and cysteine, to avoid such errors it has two additional distinct editing activities against alanine. One activity is designated as 'pretransfer' editing and involves the tRNA(Pro)-independent hydrolysis of activated Ala-AMP. The other activity is designated 'posttransfer' editing and involves deacylation of mischarged Ala-tRNA(Pro). The misacylated Cys-tRNA(Pro) is not edited by ProRS. The protein is Proline--tRNA ligase of Shewanella sp. (strain MR-7).